Reading from the N-terminus, the 294-residue chain is tRNA dimethylallyltransferase (294 aa).

10–17 (GPTAVGKT) contacts ATP. 12 to 17 (TAVGKT) is a binding site for substrate. The interval 35-38 (DSQQ) is interaction with substrate tRNA.

The protein belongs to the IPP transferase family. Monomer. Mg(2+) is required as a cofactor.

The catalysed reaction is adenosine(37) in tRNA + dimethylallyl diphosphate = N(6)-dimethylallyladenosine(37) in tRNA + diphosphate. Its function is as follows. Catalyzes the transfer of a dimethylallyl group onto the adenine at position 37 in tRNAs that read codons beginning with uridine, leading to the formation of N6-(dimethylallyl)adenosine (i(6)A). This chain is tRNA dimethylallyltransferase, found in Streptococcus pneumoniae serotype 4 (strain ATCC BAA-334 / TIGR4).